The chain runs to 152 residues: Transcriptional regulator MraZ (152 aa).

SpoVT-AbrB domains are found at residues Thr-5–Glu-52 and Ala-81–Ala-124.

The protein belongs to the MraZ family. In terms of assembly, forms oligomers.

The protein resides in the cytoplasm. It localises to the nucleoid. This Colwellia psychrerythraea (strain 34H / ATCC BAA-681) (Vibrio psychroerythus) protein is Transcriptional regulator MraZ.